A 350-amino-acid polypeptide reads, in one-letter code: Phosphotriesterase-related protein (350 aa).

A divalent metal cation contacts are provided by histidine 22, histidine 24, glutamate 169, histidine 201, histidine 230, and aspartate 298.

Belongs to the metallo-dependent hydrolases superfamily. Phosphotriesterase family. A divalent metal cation serves as cofactor.

The polypeptide is Phosphotriesterase-related protein (Drosophila melanogaster (Fruit fly)).